The primary structure comprises 468 residues: N-acetyltransferase SLI1 (468 aa).

It is found in the endoplasmic reticulum. Functionally, confers resistance to the sphingolipid biosynthesis inhibitor drug myriocin (ISP-1). Inactivates ISP-1 by converting it into N-acetyl-myriocin. Cooperates with YPK1 in mediating resistance to myriocin. This Saccharomyces cerevisiae (strain ATCC 204508 / S288c) (Baker's yeast) protein is N-acetyltransferase SLI1 (SLI1).